Consider the following 397-residue polypeptide: GTPase Obg (397 aa).

An Obg domain is found at M1–L159. The interval T128–E148 is disordered. Positions R129–G144 are enriched in polar residues. The OBG-type G domain occupies A160–E333. GTP is bound by residues G166–S173, F191–V195, D213–G216, N283–D286, and S314–L316. 2 residues coordinate Mg(2+): S173 and T193. Acidic residues predominate over residues A336–E347. The interval A336 to E397 is disordered. Residues E349–A370 are compositionally biased toward basic and acidic residues. A compositionally biased stretch (acidic residues) spans D378–V390.

The protein belongs to the TRAFAC class OBG-HflX-like GTPase superfamily. OBG GTPase family. Monomer. Mg(2+) is required as a cofactor.

Its subcellular location is the cytoplasm. Its function is as follows. An essential GTPase which binds GTP, GDP and possibly (p)ppGpp with moderate affinity, with high nucleotide exchange rates and a fairly low GTP hydrolysis rate. Plays a role in control of the cell cycle, stress response, ribosome biogenesis and in those bacteria that undergo differentiation, in morphogenesis control. This Marinobacter nauticus (strain ATCC 700491 / DSM 11845 / VT8) (Marinobacter aquaeolei) protein is GTPase Obg.